We begin with the raw amino-acid sequence, 928 residues long: MYCBP-associated protein (928 aa).

2 disordered regions span residues 1-38 (MKKA…PVSN) and 164-183 (EEPK…APPL). The span at 164-177 (EEPKPKSPKEEKRP) shows a compositional bias: basic and acidic residues. Ser-557 bears the Phosphoserine mark. Phosphothreonine is present on Thr-558. Phosphoserine is present on Ser-564. The segment at 786–881 (IPDEGQKSPP…SSATSQEPID (96 aa)) is disordered. A compositionally biased stretch (basic and acidic residues) spans 806–865 (LGKEDRRGGAQEKKQLSARDKEEKKGSKTPSKEDRLNSKKQKAKDDKKVVKSTSRDRLLS).

Interacts with MYCBP. As to expression, expressed in brain, retina, testis, heart and lung. Not detected in liver, kidney or intestine. In brain, highly abundant in CNS neurons of the hippocampus and cerebellum. Strongly expressed in cochlea and vestibular sensory epithelia. In both the organ of Corti and the vestibular organ, expression is restricted to hair cells.

It localises to the cytoplasm. The protein resides in the membrane. May play a role in spermatogenesis. May be involved in synaptic processes. This chain is MYCBP-associated protein, found in Rattus norvegicus (Rat).